Reading from the N-terminus, the 334-residue chain is Glycerol-3-phosphate dehydrogenase [NAD(P)+] (334 aa).

NADPH-binding residues include W13, R33, and K106. Sn-glycerol 3-phosphate contacts are provided by K106, G137, and S139. NADPH is bound at residue A141. The sn-glycerol 3-phosphate site is built by K192, D245, S255, R256, and N257. K192 (proton acceptor) is an active-site residue. R256 is an NADPH binding site. The NADPH site is built by V280 and E282.

Belongs to the NAD-dependent glycerol-3-phosphate dehydrogenase family.

Its subcellular location is the cytoplasm. It carries out the reaction sn-glycerol 3-phosphate + NAD(+) = dihydroxyacetone phosphate + NADH + H(+). The catalysed reaction is sn-glycerol 3-phosphate + NADP(+) = dihydroxyacetone phosphate + NADPH + H(+). It participates in membrane lipid metabolism; glycerophospholipid metabolism. Catalyzes the reduction of the glycolytic intermediate dihydroxyacetone phosphate (DHAP) to sn-glycerol 3-phosphate (G3P), the key precursor for phospholipid synthesis. This Chlamydia abortus (strain DSM 27085 / S26/3) (Chlamydophila abortus) protein is Glycerol-3-phosphate dehydrogenase [NAD(P)+].